We begin with the raw amino-acid sequence, 374 residues long: Protein STRICTOSIDINE SYNTHASE-LIKE 10 (374 aa).

Residues methionine 1 to alanine 18 form the signal peptide. Asparagine 50 carries an N-linked (GlcNAc...) asparagine glycan.

This sequence belongs to the strictosidine synthase family.

Its subcellular location is the vacuole. The protein is Protein STRICTOSIDINE SYNTHASE-LIKE 10 of Arabidopsis thaliana (Mouse-ear cress).